A 147-amino-acid polypeptide reads, in one-letter code: Hemoglobin subunit gamma (147 aa).

Residues 3 to 147 (NFTAEDKAAI…VASALASRYH (145 aa)) form the Globin domain. His-64 and His-93 together coordinate heme b.

The protein belongs to the globin family. As to quaternary structure, heterotetramer of two alpha chains and two gamma chains in fetal hemoglobin (Hb F). Red blood cells.

Its function is as follows. Gamma chains make up the fetal hemoglobin F, in combination with alpha chains. The sequence is that of Hemoglobin subunit gamma (HBG) from Alouatta belzebul (Red-handed howler monkey).